The following is a 2378-amino-acid chain: Serine/threonine-protein kinase ATM (2378 aa).

The FAT domain maps to 1415 to 1937 (LSARKRNTMM…LHTILMYDDE (523 aa)). Residues 2044-2366 (WKDVFTIADG…LLREATSADN (323 aa)) enclose the PI3K/PI4K catalytic domain. The G-loop stretch occupies residues 2050-2056 (IADGIST). The tract at residues 2218–2226 (GLGDRHASN) is catalytic loop. Residues 2238 to 2263 (HIDLGMILEYSKRTLPVPEQVPFRIT) form an activation loop region. The region spanning 2346–2378 (TAQSSNLQIRRLLREATSADNLSRMFCGWMPFL) is the FATC domain.

Belongs to the PI3/PI4-kinase family. ATM subfamily.

Its subcellular location is the nucleus. The catalysed reaction is L-seryl-[protein] + ATP = O-phospho-L-seryl-[protein] + ADP + H(+). It catalyses the reaction L-threonyl-[protein] + ATP = O-phospho-L-threonyl-[protein] + ADP + H(+). Functionally, serine/threonine protein kinase which activates checkpoint signaling in the presence of DNA double strand breaks (DSBs) and other forms of DNA damage induced by ionizing radiation and other genotoxic stresses such as UV. Plays a role in maintaining genome stability. This chain is Serine/threonine-protein kinase ATM (atm-1), found in Caenorhabditis elegans.